We begin with the raw amino-acid sequence, 176 residues long: Dual-action ribosomal maturation protein DarP (176 aa).

This sequence belongs to the DarP family.

The protein localises to the cytoplasm. Member of a network of 50S ribosomal subunit biogenesis factors which assembles along the 30S-50S interface, preventing incorrect 23S rRNA structures from forming. Promotes peptidyl transferase center (PTC) maturation. The protein is Dual-action ribosomal maturation protein DarP of Actinobacillus pleuropneumoniae serotype 5b (strain L20).